The primary structure comprises 397 residues: Putative 3'(2'),5'-bisphosphate nucleotidase, mitochondrial (397 aa).

The transit peptide at 1–16 directs the protein to the mitochondrion; that stretch reads MYILDTGARFSAVRFS. The active-site Proton acceptor is D91. The Mg(2+) site is built by E114, D174, I176, and D177. Catalysis depends on T179, which acts as the Proton acceptor. Adenosine 3',5'-bisphosphate-binding residues include T179, S305, K308, and D334. Residues S305, K308, and D334 each coordinate AMP. Mg(2+) is bound at residue D334.

This sequence belongs to the inositol monophosphatase superfamily. The cofactor is Mg(2+).

The protein localises to the mitochondrion. The catalysed reaction is 3'-phosphoadenylyl sulfate + H2O = adenosine 5'-phosphosulfate + phosphate. It catalyses the reaction adenosine 3',5'-bisphosphate + H2O = AMP + phosphate. It carries out the reaction adenosine 2',5'-bisphosphate + H2O = AMP + phosphate. Its function is as follows. Phosphatase that converts adenosine 3'-phosphate 5'-phosphosulfate (PAPS) to adenosine 5'-phosphosulfate (APS) and 3'(2')-phosphoadenosine 5'-phosphate (PAP) to AMP. The protein is Putative 3'(2'),5'-bisphosphate nucleotidase, mitochondrial of Arabidopsis thaliana (Mouse-ear cress).